Here is a 129-residue protein sequence, read N- to C-terminus: UPF0344 protein SAB0838 (129 aa).

The next 4 helical transmembrane spans lie at 1–21 (MLHLHILSWVLAIILFIATYL), 36–56 (LHMVLRLFMLLMLISGFWILI), 67–87 (MLLTLKMLCGVAVVGLMEVSI), and 99–119 (MFWITIALIIITMVLGVILPL).

This sequence belongs to the UPF0344 family.

It localises to the cell membrane. The polypeptide is UPF0344 protein SAB0838 (Staphylococcus aureus (strain bovine RF122 / ET3-1)).